The chain runs to 552 residues: Membrane protein insertase YidC (552 aa).

Residues 6 to 26 traverse the membrane as a helical segment; it reads NLLLAAIAAVILMLFIRWNHF. Polar residues-rich tracts occupy residues 32–41 and 60–70; these read QHQAGNTPAG and PTASDTPQATA. The tract at residues 32–70 is disordered; that stretch reads QHQAGNTPAGSSIAAIAPDSNGDIPSAVPTASDTPQATA. Helical transmembrane passes span 365 to 387, 431 to 451, 472 to 492, and 508 to 528; these read WGLA…SAAS, FGGC…YWVL, MDPY…MQKL, and LPFV…LYWV.

It belongs to the OXA1/ALB3/YidC family. Type 1 subfamily. Interacts with the Sec translocase complex via SecD. Specifically interacts with transmembrane segments of nascent integral membrane proteins during membrane integration.

It is found in the cell inner membrane. Functionally, required for the insertion and/or proper folding and/or complex formation of integral membrane proteins into the membrane. Involved in integration of membrane proteins that insert both dependently and independently of the Sec translocase complex, as well as at least some lipoproteins. Aids folding of multispanning membrane proteins. In Cellvibrio japonicus (strain Ueda107) (Pseudomonas fluorescens subsp. cellulosa), this protein is Membrane protein insertase YidC.